The chain runs to 319 residues: Acetyl-coenzyme A carboxylase carboxyl transferase subunit alpha (319 aa).

A CoA carboxyltransferase C-terminal domain is found at asparagine 35–aspartate 296.

The protein belongs to the AccA family. In terms of assembly, acetyl-CoA carboxylase is a heterohexamer composed of biotin carboxyl carrier protein (AccB), biotin carboxylase (AccC) and two subunits each of ACCase subunit alpha (AccA) and ACCase subunit beta (AccD).

The protein resides in the cytoplasm. It carries out the reaction N(6)-carboxybiotinyl-L-lysyl-[protein] + acetyl-CoA = N(6)-biotinyl-L-lysyl-[protein] + malonyl-CoA. It functions in the pathway lipid metabolism; malonyl-CoA biosynthesis; malonyl-CoA from acetyl-CoA: step 1/1. Functionally, component of the acetyl coenzyme A carboxylase (ACC) complex. First, biotin carboxylase catalyzes the carboxylation of biotin on its carrier protein (BCCP) and then the CO(2) group is transferred by the carboxyltransferase to acetyl-CoA to form malonyl-CoA. This is Acetyl-coenzyme A carboxylase carboxyl transferase subunit alpha from Salmonella agona (strain SL483).